Here is a 163-residue protein sequence, read N- to C-terminus: Type-1 angiotensin II receptor-associated protein-like (163 aa).

The Extracellular segment spans residues 1 to 28 (MELPAVNLKAIVFTHWLLTVFACMIDWL). A helical transmembrane segment spans residues 29–49 (PKAYGLANITILAMGVWAIAQ). The Cytoplasmic portion of the chain corresponds to 50–55 (RDSIDA). The helical transmembrane segment at 56–76 (IFMFLIGLLLTILTDILLFAL) threads the bilayer. At 77–95 (YFTEAEKASESGPLRDLFR) the chain is on the extracellular side. The chain crosses the membrane as a helical span at residues 96–116 (FSSGMGIFSLLLKPLSCFFMY). The Cytoplasmic segment spans residues 117–163 (HMYRERGGEYFVNLGFITLSRDRSSYQSIEHMDPPADQDNKLPSRTY).

It is found in the membrane. In terms of biological role, appears to be a negative regulator of angiotensin II type I receptor-mediated signaling. The protein is Type-1 angiotensin II receptor-associated protein-like (agtrap) of Xenopus tropicalis (Western clawed frog).